The sequence spans 126 residues: Membrane-anchored ubiquitin-fold protein 2 (126 aa).

A Ubiquitin-like domain is found at 14-79 (VEVRFRLDDG…VLENNRTLAE (66 aa)). A Cysteine methyl ester modification is found at Cys-123. The S-geranylgeranyl cysteine moiety is linked to residue Cys-123. Residues 124–126 (TIL) constitute a propeptide, removed in mature form.

It is found in the cell membrane. In terms of biological role, may serve as docking site to facilitate the association of other proteins to the plasma membrane. The protein is Membrane-anchored ubiquitin-fold protein 2 (MUB2) of Oryza sativa subsp. japonica (Rice).